A 240-amino-acid chain; its full sequence is Cell division control protein 14 (240 aa).

As to quaternary structure, interacts with sid1.

It is found in the cytoplasm. The protein localises to the cytoskeleton. The protein resides in the microtubule organizing center. Its subcellular location is the spindle pole body. Its function is as follows. Has a role in the septation initiation network (SIN) required for cytokinesis. This Schizosaccharomyces pombe (strain 972 / ATCC 24843) (Fission yeast) protein is Cell division control protein 14 (cdc14).